The primary structure comprises 85 residues: Large ribosomal subunit protein bL27 (85 aa).

This sequence belongs to the bacterial ribosomal protein bL27 family.

This chain is Large ribosomal subunit protein bL27, found in Solibacter usitatus (strain Ellin6076).